The primary structure comprises 201 residues: MBF complex negative regulatory component yox1 (201 aa).

Polar residues predominate over residues 1–22; it reads MSLSDSPSKSGNTGKDLISNNE. Residues 1–42 form a disordered region; sequence MSLSDSPSKSGNTGKDLISNNEAKNHEDEETHQKKRRRRTTD. The span at 23 to 32 shows a compositional bias: basic and acidic residues; the sequence is AKNHEDEETH. The homeobox DNA-binding region spans 33–92; the sequence is QKKRRRRTTDAEATLLEQYFLKTPKPSLIERQELSKKLKSSMTPRELQIWFQNKRQSLRR.

In terms of assembly, component of the MBF transcription factor complex. Post-translationally, phosphorylated in response to hydroxyurea. Phosphorylation inhibits the repressor activity and is dependent on rad3. However, the regulation of yox1 by rad3 is probably indirect.

It localises to the nucleus. Its function is as follows. Negative regulatory component of the MBF transcription factor complex involved in cell-cycle G1/S phase-specific gene expression and more particularly DNA replication checkpoint-dependent gene expression. The polypeptide is MBF complex negative regulatory component yox1 (yox1) (Schizosaccharomyces pombe (strain 972 / ATCC 24843) (Fission yeast)).